Reading from the N-terminus, the 152-residue chain is MKISIISFGSSPREWLGLYKKEINKIKQFKYQIEFINLSEHSQENIELKKMLETKDILQKIPKNSSCYLFTERGKTVTSKEFSQLLNFSNICFIIGGSYGVDEKLIAKSRPDIGFLSFGKLTFAHKIFKLIVLEQIYRGFSIKFNRKYHHAD.

S-adenosyl-L-methionine is bound by residues leucine 69, glycine 96, and 118 to 123 (FGKLTF).

The protein belongs to the RNA methyltransferase RlmH family. In terms of assembly, homodimer.

The protein resides in the cytoplasm. The catalysed reaction is pseudouridine(1915) in 23S rRNA + S-adenosyl-L-methionine = N(3)-methylpseudouridine(1915) in 23S rRNA + S-adenosyl-L-homocysteine + H(+). Specifically methylates the pseudouridine at position 1915 (m3Psi1915) in 23S rRNA. This Mesomycoplasma hyopneumoniae (strain 232) (Mycoplasma hyopneumoniae) protein is Ribosomal RNA large subunit methyltransferase H.